The following is a 191-amino-acid chain: Peptidyl-tRNA hydrolase (191 aa).

Tyrosine 14 contributes to the tRNA binding site. Histidine 19 acts as the Proton acceptor in catalysis. TRNA contacts are provided by tyrosine 64, asparagine 66, and asparagine 112.

The protein belongs to the PTH family. Monomer.

Its subcellular location is the cytoplasm. The catalysed reaction is an N-acyl-L-alpha-aminoacyl-tRNA + H2O = an N-acyl-L-amino acid + a tRNA + H(+). Functionally, hydrolyzes ribosome-free peptidyl-tRNAs (with 1 or more amino acids incorporated), which drop off the ribosome during protein synthesis, or as a result of ribosome stalling. In terms of biological role, catalyzes the release of premature peptidyl moieties from peptidyl-tRNA molecules trapped in stalled 50S ribosomal subunits, and thus maintains levels of free tRNAs and 50S ribosomes. The protein is Peptidyl-tRNA hydrolase of Syntrophotalea carbinolica (strain DSM 2380 / NBRC 103641 / GraBd1) (Pelobacter carbinolicus).